We begin with the raw amino-acid sequence, 115 residues long: Kunitz-type trypsin inhibitor 1 (115 aa).

This sequence belongs to the protease inhibitor I3 (leguminous Kunitz-type inhibitor) family.

Its function is as follows. Exhibits Kunitz trypsin protease inhibitor activity. The sequence is that of Kunitz-type trypsin inhibitor 1 from Selenicereus undatus (Pitahaya).